The primary structure comprises 227 residues: 2-C-methyl-D-erythritol 4-phosphate cytidylyltransferase (227 aa).

The protein belongs to the IspD/TarI cytidylyltransferase family. IspD subfamily.

It catalyses the reaction 2-C-methyl-D-erythritol 4-phosphate + CTP + H(+) = 4-CDP-2-C-methyl-D-erythritol + diphosphate. The protein operates within isoprenoid biosynthesis; isopentenyl diphosphate biosynthesis via DXP pathway; isopentenyl diphosphate from 1-deoxy-D-xylulose 5-phosphate: step 2/6. Its function is as follows. Catalyzes the formation of 4-diphosphocytidyl-2-C-methyl-D-erythritol from CTP and 2-C-methyl-D-erythritol 4-phosphate (MEP). The chain is 2-C-methyl-D-erythritol 4-phosphate cytidylyltransferase from Bordetella parapertussis (strain 12822 / ATCC BAA-587 / NCTC 13253).